We begin with the raw amino-acid sequence, 299 residues long: Farnesyl diphosphate synthase (299 aa).

Isopentenyl diphosphate is bound by residues Lys-45, Arg-48, and His-77. Mg(2+) contacts are provided by Asp-84 and Asp-90. Arg-95 is a (2E)-geranyl diphosphate binding site. Arg-96 is an isopentenyl diphosphate binding site. (2E)-geranyl diphosphate-binding residues include Lys-181, Thr-182, Gln-220, and Lys-237.

It belongs to the FPP/GGPP synthase family. Mg(2+) is required as a cofactor.

The protein localises to the cytoplasm. It carries out the reaction isopentenyl diphosphate + (2E)-geranyl diphosphate = (2E,6E)-farnesyl diphosphate + diphosphate. The polypeptide is Farnesyl diphosphate synthase (ispA) (Escherichia coli (strain K12)).